The primary structure comprises 312 residues: Ribonuclease HIII (312 aa).

In terms of domain architecture, RNase H type-2 spans 95–311 (FNCIGSDEAG…REKAQKILKP (217 aa)). The a divalent metal cation site is built by D101, E102, and D206.

It belongs to the RNase HII family. RnhC subfamily. The cofactor is Mn(2+). Requires Mg(2+) as cofactor.

It is found in the cytoplasm. It catalyses the reaction Endonucleolytic cleavage to 5'-phosphomonoester.. Functionally, endonuclease that specifically degrades the RNA of RNA-DNA hybrids. This chain is Ribonuclease HIII, found in Staphylococcus aureus (strain USA300).